We begin with the raw amino-acid sequence, 229 residues long: Large ribosomal subunit protein uL1 (229 aa).

This sequence belongs to the universal ribosomal protein uL1 family. Part of the 50S ribosomal subunit.

Binds directly to 23S rRNA. The L1 stalk is quite mobile in the ribosome, and is involved in E site tRNA release. In terms of biological role, protein L1 is also a translational repressor protein, it controls the translation of the L11 operon by binding to its mRNA. The polypeptide is Large ribosomal subunit protein uL1 (Pelagibacter ubique (strain HTCC1062)).